Reading from the N-terminus, the 67-residue chain is Penaeidin-4c (67 aa).

The N-terminal stretch at methionine 1–glycine 19 is a signal peptide. 3 cysteine pairs are disulfide-bonded: cysteine 42–cysteine 56, cysteine 45–cysteine 63, and cysteine 57–cysteine 64. Arginine 66 is subject to Arginine amide.

The protein belongs to the penaeidin family.

The protein resides in the cytoplasmic granule. Functionally, antibacterial and antifungal activity. Presents chitin-binding activity. The sequence is that of Penaeidin-4c from Penaeus vannamei (Whiteleg shrimp).